Consider the following 419-residue polypeptide: Gamma-glutamyl phosphate reductase (419 aa).

Belongs to the gamma-glutamyl phosphate reductase family.

It localises to the cytoplasm. It catalyses the reaction L-glutamate 5-semialdehyde + phosphate + NADP(+) = L-glutamyl 5-phosphate + NADPH + H(+). Its pathway is amino-acid biosynthesis; L-proline biosynthesis; L-glutamate 5-semialdehyde from L-glutamate: step 2/2. Functionally, catalyzes the NADPH-dependent reduction of L-glutamate 5-phosphate into L-glutamate 5-semialdehyde and phosphate. The product spontaneously undergoes cyclization to form 1-pyrroline-5-carboxylate. This chain is Gamma-glutamyl phosphate reductase, found in Solidesulfovibrio magneticus (strain ATCC 700980 / DSM 13731 / RS-1) (Desulfovibrio magneticus).